We begin with the raw amino-acid sequence, 260 residues long: Trans-aconitate 2-methyltransferase (260 aa).

It belongs to the methyltransferase superfamily. Tam family.

Its subcellular location is the cytoplasm. The catalysed reaction is trans-aconitate + S-adenosyl-L-methionine = (E)-3-(methoxycarbonyl)pent-2-enedioate + S-adenosyl-L-homocysteine. In terms of biological role, catalyzes the S-adenosylmethionine monomethyl esterification of trans-aconitate. This Methylobacterium radiotolerans (strain ATCC 27329 / DSM 1819 / JCM 2831 / NBRC 15690 / NCIMB 10815 / 0-1) protein is Trans-aconitate 2-methyltransferase.